Consider the following 183-residue polypeptide: Endoribonuclease YbeY (183 aa).

3 residues coordinate Zn(2+): H143, H147, and H153.

This sequence belongs to the endoribonuclease YbeY family. It depends on Zn(2+) as a cofactor.

The protein resides in the cytoplasm. Functionally, single strand-specific metallo-endoribonuclease involved in late-stage 70S ribosome quality control and in maturation of the 3' terminus of the 16S rRNA. In Rickettsia bellii (strain OSU 85-389), this protein is Endoribonuclease YbeY.